The sequence spans 356 residues: Protein MGF 360-10L (356 aa).

The stretch at 57-89 (DLNTALMLATKENNYQLIKMFTDWGADINYGLI) is one ANK repeat. N-linked (GlcNAc...) asparagine; by host glycosylation is present at Asn-172. Residues 249 to 271 (NFLTIYYCFILGANINLAMIASI) form a helical membrane-spanning segment. 2 N-linked (GlcNAc...) asparagine; by host glycosylation sites follow: Asn-352 and Asn-353.

This sequence belongs to the asfivirus MGF 360 family.

It localises to the host membrane. Functionally, plays a role in virus cell tropism, and may be required for efficient virus replication in macrophages. This is Protein MGF 360-10L from African swine fever virus (isolate Tick/South Africa/Pretoriuskop Pr4/1996) (ASFV).